A 79-amino-acid chain; its full sequence is Cyclin-dependent kinases regulatory subunit 1 (79 aa).

N-acetylserine is present on S2.

Belongs to the CKS family. As to quaternary structure, forms a homohexamer that can probably bind six kinase subunits.

Functionally, binds to the catalytic subunit of the cyclin dependent kinases and is essential for their biological function. The polypeptide is Cyclin-dependent kinases regulatory subunit 1 (CKS1B) (Bos taurus (Bovine)).